A 109-amino-acid polypeptide reads, in one-letter code: MAASELLKSRVENLRDYELVVILTTDTPKEKVEAILEGISKTIAEKDGSFTEVNHWGKRKLAYLIGRYGEGYYVFIKMKAKPSSIRKINADLRISEQVIRHMAINMDEE.

The protein belongs to the bacterial ribosomal protein bS6 family.

Its function is as follows. Binds together with bS18 to 16S ribosomal RNA. This is Small ribosomal subunit protein bS6 from Dehalococcoides mccartyi (strain ATCC BAA-2266 / KCTC 15142 / 195) (Dehalococcoides ethenogenes (strain 195)).